We begin with the raw amino-acid sequence, 86 residues long: Exopolysaccharide production repressor protein (86 aa).

Residues 18–38 (FAVTLAASVFLQVVYFLSLLF) form a helical membrane-spanning segment. The disordered stretch occupies residues 44-86 (TRESDRSIHSGTRQADQPQKRDRDKTEQSNVPKLDPRRKRRTP). Positions 61-70 (PQKRDRDKTE) are enriched in basic and acidic residues.

Its subcellular location is the cell membrane. The protein operates within glycan metabolism; exopolysaccharide biosynthesis. Its function is as follows. Inhibition of exopolysaccharide synthesis (EPS) and nodulation ability (NOD). The sequence is that of Exopolysaccharide production repressor protein (exoX) from Rhizobium leguminosarum bv. phaseoli.